The sequence spans 169 residues: X polypeptide (169 aa).

Belongs to the IagB/IpgF/P19 family.

This chain is X polypeptide (yubQ), found in Escherichia coli (strain K12).